Here is a 122-residue protein sequence, read N- to C-terminus: Large ribosomal subunit protein uL14 (122 aa).

Belongs to the universal ribosomal protein uL14 family. Part of the 50S ribosomal subunit. Forms a cluster with proteins L3 and L19. In the 70S ribosome, L14 and L19 interact and together make contacts with the 16S rRNA in bridges B5 and B8.

Binds to 23S rRNA. Forms part of two intersubunit bridges in the 70S ribosome. This is Large ribosomal subunit protein uL14 from Neisseria gonorrhoeae (strain ATCC 700825 / FA 1090).